The following is a 297-amino-acid chain: 3-mercaptopyruvate sulfurtransferase (297 aa).

Alanine 2 bears the N-acetylalanine mark. A phosphoserine mark is found at serine 3, tryptophan 15, proline 23, and serine 35. In terms of domain architecture, Rhodanese 1 spans alanine 25–serine 144. Lysine 40 is modified (N6-acetyllysine; alternate). N6-succinyllysine; alternate is present on lysine 40. The segment at glycine 145–proline 160 is hinge. 2 positions are modified to N6-succinyllysine: lysine 146 and lysine 164. The 115-residue stretch at glutamate 174–valine 288 folds into the Rhodanese 2 domain. Arginine 188 is a substrate binding site. The active-site Cysteine persulfide intermediate is the cysteine 248.

Monomer (active form). Homodimer; disulfide-linked (inactive form).

The protein resides in the cytoplasm. It localises to the mitochondrion. The protein localises to the synapse. It is found in the synaptosome. It catalyses the reaction 2-oxo-3-sulfanylpropanoate + [thioredoxin]-dithiol = [thioredoxin]-disulfide + hydrogen sulfide + pyruvate + H(+). Its activity is regulated as follows. By oxidative stress, and thioredoxin. Under oxidative stress conditions, the catalytic cysteine site is converted to a sulfenate which inhibits the MPST enzyme activity. Reduced thioredoxin cleaves an intersubunit disulfide bond to turn on the redox switch and reactivate the enzyme. Functionally, transfer of a sulfur ion to cyanide or to other thiol compounds. Also has weak rhodanese activity. Detoxifies cyanide and is required for thiosulfate biosynthesis. Acts as an antioxidant. In combination with cysteine aminotransferase (CAT), contributes to the catabolism of cysteine and is an important producer of hydrogen sulfide in the brain, retina and vascular endothelial cells. Hydrogen sulfide H(2)S is an important synaptic modulator, signaling molecule, smooth muscle contractor and neuroprotectant. Its production by the 3MST/CAT pathway is regulated by calcium ions. The protein is 3-mercaptopyruvate sulfurtransferase (MPST) of Homo sapiens (Human).